The sequence spans 370 residues: S-adenosylmethionine decarboxylase proenzyme (370 aa).

F28 is a binding site for substrate. Catalysis depends on residues E29 and E32. E85 contributes to the substrate binding site. The active-site Schiff-base intermediate with substrate; via pyruvic acid is S86. S86 bears the Pyruvic acid (Ser); by autocatalysis mark. C100 (proton donor; for catalytic activity) is an active-site residue. Active-site proton acceptor; for processing activity residues include S249 and H262. E266 is a binding site for substrate.

It belongs to the eukaryotic AdoMetDC family. Forms a heterodimer with catalytically inactive AdoMetDC prozyme; heterodimerization is required to activate AdoMetDC. Pyruvate serves as cofactor. Post-translationally, is synthesized initially as an inactive proenzyme. Formation of the active enzyme involves a self-maturation process in which the active site pyruvoyl group is generated from an internal serine residue via an autocatalytic post-translational modification. Two non-identical subunits are generated from the proenzyme in this reaction, and the pyruvate is formed at the N-terminus of the alpha chain, which is derived from the carboxyl end of the proenzyme. The post-translation cleavage follows an unusual pathway, termed non-hydrolytic serinolysis, in which the side chain hydroxyl group of the serine supplies its oxygen atom to form the C-terminus of the beta chain, while the remainder of the serine residue undergoes an oxidative deamination to produce ammonia and the pyruvoyl group blocking the N-terminus of the alpha chain.

The enzyme catalyses S-adenosyl-L-methionine + H(+) = S-adenosyl 3-(methylsulfanyl)propylamine + CO2. It functions in the pathway amine and polyamine biosynthesis; S-adenosylmethioninamine biosynthesis; S-adenosylmethioninamine from S-adenosyl-L-methionine: step 1/1. Its activity is regulated as follows. Allosterically activated by AdoMetDC prozyme. Activated by putrescine and to a lesser extent by spermidine, norspermidine and spermine. Inhibited by 5'-([(Z)-4-amino-2-butenyl]methylamino)-5'-deoxyadenosine (MDL 73811). In terms of biological role, in association with the catalytically inactive AdoMetDC prozyme, catalyzes the decarboxylation of S-adenosyl-L-methionine which is essential for the biosynthesis of the polyamine spermidine. Required for growth and survival during the bloodstream life cycle stage. This chain is S-adenosylmethionine decarboxylase proenzyme, found in Trypanosoma brucei brucei.